Consider the following 495-residue polypeptide: Protein BFR2 (495 aa).

2 disordered regions span residues 10-155 (ISQL…DSSA) and 462-495 (FNEDDDGEEKEKEEKEEKEEQELVIPDDGLRIFG). The segment covering 23-45 (IENFEDRDDGSESGGDVDYDSDL) has biased composition (acidic residues). Residues 46–62 (ATEHYVKVGKSKLRDDA) are compositionally biased toward basic and acidic residues. Residues 81–151 (DDEDEDGDGA…SDEELSENEN (71 aa)) show a composition bias toward acidic residues.

Belongs to the AATF family.

The protein localises to the nucleus. It localises to the nucleolus. In Yarrowia lipolytica (strain CLIB 122 / E 150) (Yeast), this protein is Protein BFR2 (BFR2).